Reading from the N-terminus, the 212-residue chain is Protein RER1C (212 aa).

Met-1 bears the N-acetylmethionine mark. Transmembrane regions (helical) follow at residues 55-75, 82-102, 135-155, and 157-177; these read TVPHVLYRWIACLCVVLIYIV, GFYIITYAIGIYLLNLIIAFL, EFKFWLSIIRAFIIGFMMTFF, and VFDVPVFWPILLFYWVMLFFL.

Belongs to the RER1 family.

It localises to the membrane. In terms of biological role, involved in the retrieval of endoplasmic reticulum membrane proteins from the early Golgi compartment. This is Protein RER1C (RER1C) from Arabidopsis thaliana (Mouse-ear cress).